The chain runs to 270 residues: Molybdenum storage protein subunit beta (270 aa).

In terms of assembly, octamer consisting of 4 alpha and 4 beta chains.

It localises to the cytoplasm. Intracellular storage of molybdenum. Binds polyoxomolybdates. Can bind at least 90 molybdenum atoms per protein molecule. The sequence is that of Molybdenum storage protein subunit beta from Azotobacter vinelandii (strain DJ / ATCC BAA-1303).